The primary structure comprises 137 residues: Endoribonuclease YbeY (137 aa).

Residues His105, His109, and Asp115 each coordinate Zn(2+).

It belongs to the endoribonuclease YbeY family. It depends on Zn(2+) as a cofactor.

Its subcellular location is the cytoplasm. Single strand-specific metallo-endoribonuclease involved in late-stage 70S ribosome quality control and in maturation of the 3' terminus of the 16S rRNA. The polypeptide is Endoribonuclease YbeY (Chlorobium luteolum (strain DSM 273 / BCRC 81028 / 2530) (Pelodictyon luteolum)).